The chain runs to 257 residues: Imidazole glycerol phosphate synthase subunit HisF (257 aa).

Residues Asp-12 and Asp-131 contribute to the active site.

It belongs to the HisA/HisF family. Heterodimer of HisH and HisF.

It is found in the cytoplasm. The enzyme catalyses 5-[(5-phospho-1-deoxy-D-ribulos-1-ylimino)methylamino]-1-(5-phospho-beta-D-ribosyl)imidazole-4-carboxamide + L-glutamine = D-erythro-1-(imidazol-4-yl)glycerol 3-phosphate + 5-amino-1-(5-phospho-beta-D-ribosyl)imidazole-4-carboxamide + L-glutamate + H(+). Its pathway is amino-acid biosynthesis; L-histidine biosynthesis; L-histidine from 5-phospho-alpha-D-ribose 1-diphosphate: step 5/9. Its function is as follows. IGPS catalyzes the conversion of PRFAR and glutamine to IGP, AICAR and glutamate. The HisF subunit catalyzes the cyclization activity that produces IGP and AICAR from PRFAR using the ammonia provided by the HisH subunit. The polypeptide is Imidazole glycerol phosphate synthase subunit HisF (Burkholderia vietnamiensis (strain G4 / LMG 22486) (Burkholderia cepacia (strain R1808))).